We begin with the raw amino-acid sequence, 212 residues long: Leucine efflux protein (212 aa).

The next 6 helical transmembrane spans lie at 12 to 32 (TYLVGAIFIVLVPGPNTLFVL), 49 to 69 (GVFIGDAVLMFLAWAGVATLI), 71 to 91 (TTPILFNIVRYLGAFYLLYLG), 122 to 142 (ILSLTNPKAILFYVSFFVQFI), 153 to 173 (FFILAATLELVSFCYLSFLII), and 188 to 208 (LAKVGNSLIGLMFVGFAARLA).

The protein belongs to the Rht family.

The protein resides in the cell inner membrane. It catalyses the reaction L-leucine(in) + H(+)(out) = L-leucine(out) + H(+)(in). With respect to regulation, leucine export is inhibited by the proton ionophore carbonyl cyanide m-chlorophenylhydrazone (CCCP). In terms of biological role, exporter of leucine. Can also transport its natural analog L-alpha-amino-n-butyric acid and some other structurally unrelated amino acids. Leucine excretion is probably driven by proton motive force. In Escherichia coli (strain K12), this protein is Leucine efflux protein.